The sequence spans 701 residues: Polyribonucleotide nucleotidyltransferase (701 aa).

2 residues coordinate Mg(2+): aspartate 487 and aspartate 493. In terms of domain architecture, KH spans 554-613 (PTMLAMKIDQDKIRDVIGKGGATIRAICEETKASIDIEDDGSIKIFGETKEAAEAAKQRV). Residues 623–691 (GKIYVGKVER…NRGRIKLSIK (69 aa)) enclose the S1 motif domain.

The protein belongs to the polyribonucleotide nucleotidyltransferase family. Component of the RNA degradosome, which is a multiprotein complex involved in RNA processing and mRNA degradation. Mg(2+) serves as cofactor.

Its subcellular location is the cytoplasm. It carries out the reaction RNA(n+1) + phosphate = RNA(n) + a ribonucleoside 5'-diphosphate. Involved in mRNA degradation. Catalyzes the phosphorolysis of single-stranded polyribonucleotides processively in the 3'- to 5'-direction. This Stutzerimonas stutzeri (strain A1501) (Pseudomonas stutzeri) protein is Polyribonucleotide nucleotidyltransferase.